A 296-amino-acid polypeptide reads, in one-letter code: Zinc finger protein 75A (296 aa).

In terms of domain architecture, KRAB spans 1–66; sequence MYFSQEEWEL…VSPEFKDSAG (66 aa). 5 C2H2-type zinc fingers span residues 161 to 183, 189 to 211, 217 to 239, 245 to 267, and 273 to 295; these read FKCQ…QRIH, YKCQ…LTTH, YKCS…QRTH, FTCH…RRTH, and YTCS…QKLH.

Belongs to the krueppel C2H2-type zinc-finger protein family.

It localises to the nucleus. Its function is as follows. May be involved in transcriptional regulation. The sequence is that of Zinc finger protein 75A (ZNF75A) from Homo sapiens (Human).